The following is a 515-amino-acid chain: ATP-dependent RNA helicase DBP3 (515 aa).

Residues 1-67 (MAKRPLQTEA…SDSRYLPTPE (67 aa)) are disordered. The Q motif signature appears at 100 to 127 (TSFSFLPESSNDLYLPLEKFSSPTPIQA). In terms of domain architecture, Helicase ATP-binding spans 130 to 306 (WPLAFAGRDL…ASFTKNPVTV (177 aa)). 143–150 (AETGSGKT) is an ATP binding site. Residues 252-255 (DEAD) carry the DEAD box motif. Residues 335-484 (RLLELLRRYQ…DVPESLLKFG (150 aa)) form the Helicase C-terminal domain.

The protein belongs to the DEAD box helicase family. DDX5/DBP2 subfamily.

It localises to the nucleus. It is found in the nucleolus. The enzyme catalyses ATP + H2O = ADP + phosphate + H(+). In terms of biological role, ATP-dependent RNA helicase required for 60S ribosomal subunit synthesis. Involved in efficient pre-rRNA processing, predominantly at site A3, which is necessary for the normal formation of 25S and 5.8S rRNAs. The sequence is that of ATP-dependent RNA helicase DBP3 (DBP3) from Coccidioides immitis (strain RS) (Valley fever fungus).